An 89-amino-acid chain; its full sequence is GTP cyclohydrolase 1 feedback regulatory protein (89 aa).

This sequence belongs to the GFRP family. Homopentamer. Forms a complex with GCH1 where a GCH1 homodecamer is sandwiched by two GFRP homopentamers.

It localises to the nucleus. The protein resides in the nucleus membrane. Its subcellular location is the cytoplasm. The protein localises to the cytosol. In terms of biological role, mediates tetrahydrobiopterin inhibition of GTP cyclohydrolase 1. This chain is GTP cyclohydrolase 1 feedback regulatory protein (gchfr), found in Danio rerio (Zebrafish).